The primary structure comprises 929 residues: Pyruvate dehydrogenase E1 component (929 aa).

Residue lysine 375 forms an Isoglutamyl lysine isopeptide (Lys-Gln) (interchain with Q-Cter in protein Pup) linkage.

As to quaternary structure, homodimer. Part of the PDH complex, consisting of multiple copies of AceE (E1), DlaT (E2) and Lpd (E3). Mg(2+) is required as a cofactor. Requires thiamine diphosphate as cofactor.

It carries out the reaction N(6)-[(R)-lipoyl]-L-lysyl-[protein] + pyruvate + H(+) = N(6)-[(R)-S(8)-acetyldihydrolipoyl]-L-lysyl-[protein] + CO2. Its function is as follows. Component of the pyruvate dehydrogenase (PDH) complex, that catalyzes the overall conversion of pyruvate to acetyl-CoA and CO(2). AceE has reductase activity with pyruvate but does not react with 2-oxoglutarate. The protein is Pyruvate dehydrogenase E1 component (aceE) of Mycolicibacterium smegmatis (strain ATCC 700084 / mc(2)155) (Mycobacterium smegmatis).